The following is a 168-amino-acid chain: Chemoreceptor glutamine deamidase CheD (168 aa).

Belongs to the CheD family. Forms a complex with CheC.

It carries out the reaction L-glutaminyl-[protein] + H2O = L-glutamyl-[protein] + NH4(+). Functionally, deamidates glutamine residues to glutamate on methyl-accepting chemotaxis receptors (MCPs). CheD-mediated MCP deamidation is required for productive communication of the conformational signals of the chemoreceptors to the CheA kinase. This chain is Chemoreceptor glutamine deamidase CheD, found in Bacillus licheniformis (strain ATCC 14580 / DSM 13 / JCM 2505 / CCUG 7422 / NBRC 12200 / NCIMB 9375 / NCTC 10341 / NRRL NRS-1264 / Gibson 46).